The sequence spans 107 residues: U1-lycotoxin-Ls1g (107 aa).

The N-terminal stretch at Met-1–Ser-20 is a signal peptide. Positions Glu-21–Arg-41 are excised as a propeptide. 3 disulfides stabilise this stretch: Cys-51/Cys-68, Cys-58/Cys-86, and Cys-70/Cys-84.

The protein belongs to the neurotoxin 19 (CSTX) family. 04 (U1-Lctx) subfamily. As to expression, expressed by the venom gland.

The protein resides in the secreted. This is U1-lycotoxin-Ls1g from Lycosa singoriensis (Wolf spider).